The following is a 363-amino-acid chain: Cobalt-precorrin-5B C(1)-methyltransferase (363 aa).

This sequence belongs to the CbiD family.

The enzyme catalyses Co-precorrin-5B + S-adenosyl-L-methionine = Co-precorrin-6A + S-adenosyl-L-homocysteine. Its pathway is cofactor biosynthesis; adenosylcobalamin biosynthesis; cob(II)yrinate a,c-diamide from sirohydrochlorin (anaerobic route): step 6/10. Its function is as follows. Catalyzes the methylation of C-1 in cobalt-precorrin-5B to form cobalt-precorrin-6A. The protein is Cobalt-precorrin-5B C(1)-methyltransferase of Burkholderia mallei (strain ATCC 23344).